Reading from the N-terminus, the 779-residue chain is MGSFPLAEFPLRDIPVPYSYRVSGGIASSGSVTALVTAAGTHRNSSTAKTVETEDGEEDIDEYQRKRAAGSGESTPERSDFKRVKHDNHKTLHPVNLQNTGAASVDNDGLHNLTDISNDAEKLLMSVDDGSAAPSTLSVNMGVASHNVAAPTTVNAATITGSDVSNNVNSATINNPMEEGALPLSPTASSPGTTTPLAKTTKTINNNNNIADLIESKDSIISPEYLSDEIFSAINNNLPHAYFKNLLFRLVANMDRSELSDLGTLIKDNLKRDLITSLPFEISLKIFNYLQFEDIINSLGVSQNWNKIIRKSTSLWKKLLISENFVSPKGFNSLNLKLSQKYPKLSQQDRLRLSFLENIFILKNWYNPKFVPQRTTLRGHMTSVITCLQFEDNYVITGADDKMIRVYDSINKKFLLQLSGHDGGVWALKYAHGGILVSGSTDRTVRVWDIKKGCCTHVFKGHNSTVRCLDIVEYKNIKYIVTGSRDNTLHVWKLPKESSVPDHGEEHDYPLVFHTPEENPYFVGVLRGHMASVRTVSGHGNIVVSGSYDNTLIVWDVAQMKCLYILSGHTDRIYSTIYDHERKRCISASMDTTIRIWDLENIWNNGECSYATNSASPCAKILGAMYTLQGHTALVGLLRLSDKFLVSAAADGSIRGWDANDYSRKFSYHHTNLSAITTFYVSDNILVSGSENQFNIYNLRSGKLVHANILKDADQIWSVNFKGKTLVAAVEKDGQSFLEILDFSKASKINYVSNPVNSSSSSLESISTSLGLTRTTIIP.

A disordered region spans residues 39–80; sequence AGTHRNSSTAKTVETEDGEEDIDEYQRKRAAGSGESTPERSD. The Nuclear localization signal signature appears at 82–85; that stretch reads KRVK. At Ser-104 the chain carries Phosphoserine. Residues 272–319 form the F-box domain; sequence RDLITSLPFEISLKIFNYLQFEDIINSLGVSQNWNKIIRKSTSLWKKL. WD repeat units follow at residues 380 to 408, 420 to 449, 461 to 493, 528 to 556, 568 to 598, 630 to 658, and 669 to 698; these read HMTSVITCLQFEDNYVITGADDKMIRVYD, GHDGGVWALKYAHGGILVSGSTDRTVRVWD, GHNSTVRCLDIVEYKNIKYIVTGSRDNTLHVWK, GHMASVRTVSGHGNIVVSGSYDNTLIVWD, GHTDRIYSTIYDHERKRCISASMDTTIRIWD, GHTALVGLLRLSDKFLVSAAADGSIRGWD, and HHTNLSAITTFYVSDNILVSGSENQFNIYN.

As to quaternary structure, interacts with DCD53 and SKP1. Component of the SCF(CDC4) complex containing CDC53, SKP1, RBX1 and CDC4. CDC34. Interacts with CDC6 and CIC1. Interacts with SIC1; the interaction involves a SIC1 double phosphorylated motif (degron). Homodimerizes; the dimerization increases SIC1 ubiquitination in vitro.

Its subcellular location is the nucleus. It functions in the pathway protein modification; protein ubiquitination. Its function is as follows. Substrate recognition component of a SCF (SKP1-CUL1-F-box protein) E3 ubiquitin-protein ligase complex which mediates the ubiquitination and subsequent proteasomal degradation of target proteins. Recognizes and binds to phosphorylated target proteins. Directs ubiquitination of the phosphorylated CDK inhibitor SIC1. Involved in the degradation of CDC6 together with CDC34/UBC3 and CDC53, and in restricting the degradation of FAR1 to the nucleus. Is essential for initiation of DNA replication and separation of the spindle pole bodies to form the poles of the mitotic spindle. It also plays a role in bud development, fusion of zygotic nuclei after conjugation and various aspects of sporulation. Required for HTA1-HTB1 locus transcription activation. Required for G1/S and G2/M transition. This Saccharomyces cerevisiae (strain ATCC 204508 / S288c) (Baker's yeast) protein is Cell division control protein 4 (CDC4).